The sequence spans 419 residues: 3-isopropylmalate dehydratase large subunit (419 aa).

[4Fe-4S] cluster-binding residues include Cys-300, Cys-360, and Cys-363.

It belongs to the aconitase/IPM isomerase family. LeuC type 2 subfamily. Heterodimer of LeuC and LeuD. The cofactor is [4Fe-4S] cluster.

It catalyses the reaction (2R,3S)-3-isopropylmalate = (2S)-2-isopropylmalate. It participates in amino-acid biosynthesis; L-leucine biosynthesis; L-leucine from 3-methyl-2-oxobutanoate: step 2/4. In terms of biological role, catalyzes the isomerization between 2-isopropylmalate and 3-isopropylmalate, via the formation of 2-isopropylmaleate. This is 3-isopropylmalate dehydratase large subunit from Clostridium botulinum (strain Alaska E43 / Type E3).